The following is a 204-amino-acid chain: Dephospho-CoA kinase (204 aa).

Residues 5–204 enclose the DPCK domain; that stretch reads VVGLTGGIGS…YLANLVKAML (200 aa). 13-18 is a binding site for ATP; sequence GSGKSA.

It belongs to the CoaE family.

It is found in the cytoplasm. The enzyme catalyses 3'-dephospho-CoA + ATP = ADP + CoA + H(+). Its pathway is cofactor biosynthesis; coenzyme A biosynthesis; CoA from (R)-pantothenate: step 5/5. Functionally, catalyzes the phosphorylation of the 3'-hydroxyl group of dephosphocoenzyme A to form coenzyme A. This chain is Dephospho-CoA kinase, found in Chromobacterium violaceum (strain ATCC 12472 / DSM 30191 / JCM 1249 / CCUG 213 / NBRC 12614 / NCIMB 9131 / NCTC 9757 / MK).